The primary structure comprises 479 residues: Integrator complex subunit 12 (479 aa).

The tract at residues serine 57–isoleucine 140 is disordered. Residues lysine 70–serine 90 are compositionally biased toward low complexity. Residues threonine 91–serine 128 show a composition bias toward basic and acidic residues. The PHD-type zinc-finger motif lies at glycine 161 to glutamine 217. Disordered regions lie at residues methionine 221–proline 241, threonine 274–glycine 293, and serine 305–lysine 479. Composition is skewed to low complexity over residues glutamine 223–threonine 239 and serine 280–serine 289. The segment covering serine 305–alanine 328 has biased composition (polar residues). The segment covering serine 354–glycine 364 has biased composition (gly residues). Residues glycine 399–leucine 411 are compositionally biased toward low complexity. Positions glycine 412–serine 428 are enriched in gly residues. Over residues alanine 429–alanine 451 the composition is skewed to low complexity. Positions glutamine 466–lysine 479 are enriched in basic residues.

It belongs to the Integrator subunit 12 family. Component of the Integrator complex, composed of core subunits INTS1, INTS2, INTS3, INTS4, INTS5, INTS6, INTS7, INTS8, INTS9/RC74, INTS10, INTS11/CPSF3L, INTS12, INTS13, INTS14 and INTS15. The core complex associates with protein phosphatase 2A subunits PPP2CA and PPP2R1A, to form the Integrator-PP2A (INTAC) complex.

It is found in the nucleus. Its function is as follows. Component of the integrator complex, a multiprotein complex that terminates RNA polymerase II (Pol II) transcription in the promoter-proximal region of genes. The integrator complex provides a quality checkpoint during transcription elongation by driving premature transcription termination of transcripts that are unfavorably configured for transcriptional elongation: the complex terminates transcription by (1) catalyzing dephosphorylation of the C-terminal domain (CTD) of Pol II subunit POLR2A/RPB1 and SUPT5H/SPT5, (2) degrading the exiting nascent RNA transcript via endonuclease activity and (3) promoting the release of Pol II from bound DNA. The integrator complex is also involved in terminating the synthesis of non-coding Pol II transcripts, such as enhancer RNAs (eRNAs), small nuclear RNAs (snRNAs), telomerase RNAs and long non-coding RNAs (lncRNAs). The sequence is that of Integrator complex subunit 12 (ints12) from Danio rerio (Zebrafish).